We begin with the raw amino-acid sequence, 121 residues long: Small ribosomal subunit protein bS16 (121 aa).

The segment covering 97–114 has biased composition (basic and acidic residues); it reads LAKAKTKDEENDNSKVES. The tract at residues 97 to 121 is disordered; it reads LAKAKTKDEENDNSKVESEGNEAES.

The protein belongs to the bacterial ribosomal protein bS16 family.

The protein is Small ribosomal subunit protein bS16 of Prochlorococcus marinus (strain AS9601).